Here is a 380-residue protein sequence, read N- to C-terminus: RNA binding protein fox-1 homolog 2 (380 aa).

Polar residues-rich tracts occupy residues 1–20 (MEKN…TPDT) and 36–56 (NGLS…QSTE). Positions 1 to 117 (MEKNKMVSQG…TPKRLHVSNI (117 aa)) are disordered. Residues 72–102 (STPATSTANASSTTDGSQTEGQQSQTQNSEN) show a composition bias toward low complexity. One can recognise an RRM domain in the interval 110 to 186 (KRLHVSNIPF…RKIEVNNATA (77 aa)).

The protein localises to the nucleus. The protein resides in the cytoplasm. Functionally, RNA-binding protein that regulates alternative splicing events by binding to 5'-UGCAUGU-3' elements. Regulates alternative splicing of tissue-specific exons. This Xenopus tropicalis (Western clawed frog) protein is RNA binding protein fox-1 homolog 2 (rbfox2).